We begin with the raw amino-acid sequence, 136 residues long: Large ribosomal subunit protein uL16 (136 aa).

Belongs to the universal ribosomal protein uL16 family. Part of the 50S ribosomal subunit.

In terms of biological role, binds 23S rRNA and is also seen to make contacts with the A and possibly P site tRNAs. The polypeptide is Large ribosomal subunit protein uL16 (Rickettsia rickettsii (strain Iowa)).